The following is a 360-amino-acid chain: Protein YIM1-1 (360 aa).

This sequence belongs to the YIM1 family.

It is found in the lipid droplet. The protein resides in the mitochondrion. This Lachancea thermotolerans (strain ATCC 56472 / CBS 6340 / NRRL Y-8284) (Yeast) protein is Protein YIM1-1 (YIM1-1).